A 155-amino-acid polypeptide reads, in one-letter code: Small ribosomal subunit protein uS7 (155 aa).

This sequence belongs to the universal ribosomal protein uS7 family. Part of the 30S ribosomal subunit. Contacts proteins S9 and S11.

In terms of biological role, one of the primary rRNA binding proteins, it binds directly to 16S rRNA where it nucleates assembly of the head domain of the 30S subunit. Is located at the subunit interface close to the decoding center, probably blocks exit of the E-site tRNA. In Pseudothermotoga lettingae (strain ATCC BAA-301 / DSM 14385 / NBRC 107922 / TMO) (Thermotoga lettingae), this protein is Small ribosomal subunit protein uS7.